We begin with the raw amino-acid sequence, 199 residues long: Peroxiredoxin-1 (199 aa).

N-acetylserine is present on serine 2. In terms of domain architecture, Thioredoxin spans 6–165; that stretch reads AKIGHRAPQF…TLRLVQAFQF (160 aa). Lysine 7 is subject to N6-acetyllysine; alternate. Lysine 7 is covalently cross-linked (Glycyl lysine isopeptide (Lys-Gly) (interchain with G-Cter in SUMO2); alternate). An N6-acetyllysine mark is found at lysine 16 and lysine 27. Lysine 35 carries the N6-acetyllysine; alternate modification. Lysine 35 is subject to N6-succinyllysine; alternate. Cysteine 52 acts as the Cysteine sulfenic acid (-SOH) intermediate in catalysis. A Phosphothreonine modification is found at threonine 90. Residue lysine 120 forms a Glycyl lysine isopeptide (Lys-Gly) (interchain with G-Cter in SUMO2) linkage. Lysine 136 is subject to N6-acetyllysine. The tract at residues 176–199 is disordered; that stretch reads GWKPGSDTIKPDVQKSKEYFSKQK. Over residues 184 to 199 the composition is skewed to basic and acidic residues; it reads IKPDVQKSKEYFSKQK. A Glycyl lysine isopeptide (Lys-Gly) (interchain with G-Cter in SUMO1) cross-link involves residue lysine 185. Residue lysine 197 is modified to N6-acetyllysine.

The protein belongs to the peroxiredoxin family. AhpC/Prx1 subfamily. As to quaternary structure, homodimer; disulfide-linked, upon oxidation. 5 homodimers assemble to form a ring-like decamer. Interacts with GDPD5; forms a mixed-disulfide with GDPD5. Interacts with SESN1 and SESN2. Interacts with FAM107A. Post-translationally, phosphorylated on Thr-90 during the M-phase, which leads to a decrease in enzymatic activity. Acetylation increases reducing activity and resistance to superoxidation. Deacetylated by HDAC6 which decreases reducing activity.

The protein localises to the cytoplasm. It carries out the reaction a hydroperoxide + [thioredoxin]-dithiol = an alcohol + [thioredoxin]-disulfide + H2O. Functionally, thiol-specific peroxidase that catalyzes the reduction of hydrogen peroxide and organic hydroperoxides to water and alcohols, respectively. Plays a role in cell protection against oxidative stress by detoxifying peroxides and as sensor of hydrogen peroxide-mediated signaling events. Might participate in the signaling cascades of growth factors and tumor necrosis factor-alpha by regulating the intracellular concentrations of H(2)O(2). Reduces an intramolecular disulfide bond in GDPD5 that gates the ability to GDPD5 to drive postmitotic motor neuron differentiation. In Bos taurus (Bovine), this protein is Peroxiredoxin-1 (PRDX1).